The primary structure comprises 664 residues: Protein-arginine deiminase type-3 (664 aa).

Belongs to the protein arginine deiminase family. It depends on Ca(2+) as a cofactor. As to expression, epidermis and hair follicles.

The protein localises to the cytoplasm. The enzyme catalyses L-arginyl-[protein] + H2O = L-citrullyl-[protein] + NH4(+). Its function is as follows. Catalyzes the deimination of arginine residues of proteins. This chain is Protein-arginine deiminase type-3 (Padi3), found in Mus musculus (Mouse).